Reading from the N-terminus, the 225-residue chain is MERSKQSHDNQADSRPTTNESSLNGHFDGLVKKTPGMWDVKGRGTAGESSSHTGSSVVENWKHERTRSIEDNEMSLPSLAAAYTTIIRGLGKDPQRQGLLKTPWRAATAMQFFTKGYQEKIIDVLNDAILDEDHDEMVIVKDIDMFSMCEHHLVPIFGRVHIGYLPNKRVLGLSKLARIVEIYSRRLQVQERLTKQIAVAITEALQPAGVGVVIEATHMCMVMRG.

Over residues 1–12 (MERSKQSHDNQA) the composition is skewed to basic and acidic residues. The disordered stretch occupies residues 1 to 59 (MERSKQSHDNQADSRPTTNESSLNGHFDGLVKKTPGMWDVKGRGTAGESSSHTGSSVVE). 2 stretches are compositionally biased toward polar residues: residues 13-24 (DSRPTTNESSLN) and 47-58 (GESSSHTGSSVV). Zn(2+)-binding residues include Cys149, His152, and Cys220.

It belongs to the GTP cyclohydrolase I family. In terms of assembly, toroid-shaped homodecamer, composed of two pentamers of five dimers.

The protein resides in the cytoplasm. Its subcellular location is the nucleus. The catalysed reaction is GTP + H2O = 7,8-dihydroneopterin 3'-triphosphate + formate + H(+). It participates in cofactor biosynthesis; 7,8-dihydroneopterin triphosphate biosynthesis; 7,8-dihydroneopterin triphosphate from GTP: step 1/1. Its activity is regulated as follows. GTP shows a positive allosteric effect, and tetrahydrobiopterin inhibits the enzyme activity. Zinc is required for catalytic activity. Inhibited by Mg(2+). Functionally, may positively regulate nitric oxide synthesis in endothelial cells. May be involved in dopamine synthesis. May modify pain sensitivity and persistence. The protein is GTP cyclohydrolase 1 (gch1) of Oncorhynchus mykiss (Rainbow trout).